Reading from the N-terminus, the 342-residue chain is N-acetyl-gamma-glutamyl-phosphate reductase (342 aa).

The active site involves Cys149.

Belongs to the NAGSA dehydrogenase family. Type 1 subfamily.

The protein localises to the cytoplasm. The enzyme catalyses N-acetyl-L-glutamate 5-semialdehyde + phosphate + NADP(+) = N-acetyl-L-glutamyl 5-phosphate + NADPH + H(+). The protein operates within amino-acid biosynthesis; L-arginine biosynthesis; N(2)-acetyl-L-ornithine from L-glutamate: step 3/4. Functionally, catalyzes the NADPH-dependent reduction of N-acetyl-5-glutamyl phosphate to yield N-acetyl-L-glutamate 5-semialdehyde. The polypeptide is N-acetyl-gamma-glutamyl-phosphate reductase (Jannaschia sp. (strain CCS1)).